A 528-amino-acid chain; its full sequence is GMP synthase [glutamine-hydrolyzing] (528 aa).

Residues 13–204 (AIVILDFGSQ…VYHVCGCDPD (192 aa)) form the Glutamine amidotransferase type-1 domain. Cys-90 functions as the Nucleophile in the catalytic mechanism. Residues His-178 and Glu-180 contribute to the active site. A GMPS ATP-PPase domain is found at 205-403 (WTTAAFIDEA…LGLPEEIVRR (199 aa)). 232–238 (SGGVDSS) lines the ATP pocket.

In terms of assembly, homodimer.

The catalysed reaction is XMP + L-glutamine + ATP + H2O = GMP + L-glutamate + AMP + diphosphate + 2 H(+). It participates in purine metabolism; GMP biosynthesis; GMP from XMP (L-Gln route): step 1/1. In terms of biological role, catalyzes the synthesis of GMP from XMP. This chain is GMP synthase [glutamine-hydrolyzing], found in Synechococcus sp. (strain CC9605).